We begin with the raw amino-acid sequence, 368 residues long: F-box/kelch-repeat protein At5g51250 (368 aa).

The 44-residue stretch at 1-44 (MSSLPDDLLLSIFARISRLYYPTLSLVSKSFRSLLASPDLYKAR) folds into the F-box domain. Kelch repeat units lie at residues 116 to 163 (DIYN…VLDR), 165 to 218 (IYVA…CIDG), and 260 to 304 (LFYI…YGGK).

The protein is F-box/kelch-repeat protein At5g51250 of Arabidopsis thaliana (Mouse-ear cress).